The chain runs to 99 residues: Nucleoid-associated protein SAG1747 (99 aa).

Positions Met1–Gln10 are enriched in low complexity. The tract at residues Met1–Gln20 is disordered.

This sequence belongs to the YbaB/EbfC family. Homodimer.

It is found in the cytoplasm. It localises to the nucleoid. In terms of biological role, binds to DNA and alters its conformation. May be involved in regulation of gene expression, nucleoid organization and DNA protection. The chain is Nucleoid-associated protein SAG1747 from Streptococcus agalactiae serotype V (strain ATCC BAA-611 / 2603 V/R).